Here is a 129-residue protein sequence, read N- to C-terminus: Tumor necrosis factor receptor superfamily member 12A (129 aa).

Residues 1 to 27 form the signal peptide; sequence MASAWPRSLPQILVLGFGLVLMRAAAG. At 28-80 the chain is on the extracellular side; sequence EQAPGTSPCSSGSSWSADLDKCMDCASCPARPHSDFCLGCAAAPPAHFRLLWP. Cystine bridges form between cysteine 36-cysteine 49, cysteine 52-cysteine 67, and cysteine 55-cysteine 64. Residues 36–67 form a TNFR-Cys; atypical repeat; it reads CSSGSSWSADLDKCMDCASCPARPHSDFCLGC. Residues 81 to 101 form a helical membrane-spanning segment; it reads ILGGALSLVLVLALVSSFLVW. Residues 102–129 are Cytoplasmic-facing; that stretch reads RRCRRREKFTTPIEETGGEGCPGVALIQ.

In terms of assembly, associates with TRAF1 and TRAF2, and probably also with TRAF3. As to expression, highly expressed in fetal heart, intestine, kidney, liver, lung and skin, and in adult heart and ovary. Intermediate expression in adult kidney, lung and skin.

The protein resides in the membrane. Its function is as follows. Receptor for TNFSF12/TWEAK. Weak inducer of apoptosis in some cell types. Promotes angiogenesis and the proliferation of endothelial cells. May modulate cellular adhesion to matrix proteins. The chain is Tumor necrosis factor receptor superfamily member 12A (Tnfrsf12a) from Mus musculus (Mouse).